The following is a 375-amino-acid chain: Dual-specificity RNA methyltransferase RlmN (375 aa).

Glutamate 94 serves as the catalytic Proton acceptor. In terms of domain architecture, Radical SAM core spans 100–339; it reads EDDRATLCVS…VTVRKTRGDD (240 aa). A disulfide bond links cysteine 107 and cysteine 344. Cysteine 114, cysteine 118, and cysteine 121 together coordinate [4Fe-4S] cluster. Residues 168-169, serine 200, 222-224, and asparagine 301 contribute to the S-adenosyl-L-methionine site; these read GE and SLH. Cysteine 344 functions as the S-methylcysteine intermediate in the catalytic mechanism.

The protein belongs to the radical SAM superfamily. RlmN family. The cofactor is [4Fe-4S] cluster.

The protein resides in the cytoplasm. It catalyses the reaction adenosine(2503) in 23S rRNA + 2 reduced [2Fe-2S]-[ferredoxin] + 2 S-adenosyl-L-methionine = 2-methyladenosine(2503) in 23S rRNA + 5'-deoxyadenosine + L-methionine + 2 oxidized [2Fe-2S]-[ferredoxin] + S-adenosyl-L-homocysteine. The enzyme catalyses adenosine(37) in tRNA + 2 reduced [2Fe-2S]-[ferredoxin] + 2 S-adenosyl-L-methionine = 2-methyladenosine(37) in tRNA + 5'-deoxyadenosine + L-methionine + 2 oxidized [2Fe-2S]-[ferredoxin] + S-adenosyl-L-homocysteine. Its function is as follows. Specifically methylates position 2 of adenine 2503 in 23S rRNA and position 2 of adenine 37 in tRNAs. m2A2503 modification seems to play a crucial role in the proofreading step occurring at the peptidyl transferase center and thus would serve to optimize ribosomal fidelity. This is Dual-specificity RNA methyltransferase RlmN from Vibrio campbellii (strain ATCC BAA-1116).